A 222-amino-acid polypeptide reads, in one-letter code: MGLVVKDISKTFGEKTSKTEVLKDINFEVKDGEFIILNGASGSGKTTLLTILGGLLSQTSGDVVYEGKSLFERHTNKAHLRLNDIGFIFQASHLVPYLKVLDQLTLIGKETGMSSKEAQARAKELLTKIGLEEQLNSYPHMLSGGQQQRVAIMRALMNHPKIVLADEPTASLDASRAQEVVEMIRKQIKANQMIGIMITHDESLFKYADRIVQLYDGKIKNS.

The 220-residue stretch at 3–222 (LVVKDISKTF…QLYDGKIKNS (220 aa)) folds into the ABC transporter domain. 39-46 (GASGSGKT) serves as a coordination point for ATP.

Belongs to the ABC transporter superfamily. HrtA family. As to quaternary structure, the complex is composed of two ATP-binding proteins (HrtA), two transmembrane proteins (HrtB) and a solute-binding protein.

The protein resides in the cell membrane. Part of the ABC transporter complex hrt involved in hemin import. Responsible for energy coupling to the transport system. This Staphylococcus epidermidis (strain ATCC 35984 / DSM 28319 / BCRC 17069 / CCUG 31568 / BM 3577 / RP62A) protein is Putative hemin import ATP-binding protein HrtA (hrtA).